Reading from the N-terminus, the 334-residue chain is Dolichyl-phosphate beta-glucosyltransferase (334 aa).

Residues 1–12 (MRALRFLIENRN) lie on the Lumenal side of the membrane. A helical membrane pass occupies residues 13–33 (TVFFTLLVALVLSLYLLVYLF). Over 34-334 (SHTPRPPYPE…LGIYRDNKKC (301 aa)) the chain is Cytoplasmic.

This sequence belongs to the glycosyltransferase 2 family.

The protein localises to the endoplasmic reticulum membrane. It carries out the reaction a di-trans,poly-cis-dolichyl phosphate + UDP-alpha-D-glucose = a di-trans,poly-cis-dolichyl beta-D-glucosyl phosphate + UDP. The protein operates within protein modification; protein glycosylation. Its function is as follows. Endoplasmic reticulum membrane-bound UDP-glucose:dolichyl-phosphate glucosyltransferase involved in protein N-linked glycosylation. This chain is Dolichyl-phosphate beta-glucosyltransferase, found in Saccharomyces cerevisiae (strain ATCC 204508 / S288c) (Baker's yeast).